Reading from the N-terminus, the 203-residue chain is CCG-binding protein 1 (203 aa).

A disordered region spans residues 156 to 178; the sequence is IPDGLPKSEQELEEEEKSKMPDS. Over residues 161–175 the composition is skewed to basic and acidic residues; that stretch reads PKSEQELEEEEKSKM.

In terms of assembly, homotetramer. Interacts with MEE12/CCG, MED7A, MED7B, MED9, AGL49, AGL53, AGL75, AGL80, AGL81, AGL82, AGL103 and NRPB1 (via CTD). Expressed in roots, leaves, stems and flowers. Expressed in the central cell of mature ovules.

The protein localises to the nucleus. The protein resides in the cytoplasm. Required for the development of the one-cell zygote and endosperm in embryos. Required for micropylar pollen tube guidance, but has no effect on ovule development and gametophytic cell fate specification. May connect transcription factors and the Pol II machinery to regulate pollen tube attraction, via its interactions with AGAMOUS-like (AGL) transcription factors, MEE14/CCG and the Mediator complex. The chain is CCG-binding protein 1 from Arabidopsis thaliana (Mouse-ear cress).